The primary structure comprises 283 residues: Pantothenate synthetase (283 aa).

Residue 30–37 coordinates ATP; it reads MGNLHDGH. His-37 acts as the Proton donor in catalysis. Gln-61 provides a ligand contact to (R)-pantoate. Gln-61 contributes to the beta-alanine binding site. Position 149 to 152 (149 to 152) interacts with ATP; sequence GEKD. Gln-155 provides a ligand contact to (R)-pantoate. 186–189 is a binding site for ATP; sequence LSSR.

The protein belongs to the pantothenate synthetase family. In terms of assembly, homodimer.

It localises to the cytoplasm. The enzyme catalyses (R)-pantoate + beta-alanine + ATP = (R)-pantothenate + AMP + diphosphate + H(+). The protein operates within cofactor biosynthesis; (R)-pantothenate biosynthesis; (R)-pantothenate from (R)-pantoate and beta-alanine: step 1/1. Its function is as follows. Catalyzes the condensation of pantoate with beta-alanine in an ATP-dependent reaction via a pantoyl-adenylate intermediate. The polypeptide is Pantothenate synthetase (Escherichia fergusonii (strain ATCC 35469 / DSM 13698 / CCUG 18766 / IAM 14443 / JCM 21226 / LMG 7866 / NBRC 102419 / NCTC 12128 / CDC 0568-73)).